The following is a 219-amino-acid chain: LexA repressor (219 aa).

The segment at residues 28–48 (RAEIAAELGFRSANAAEEHLQ) is a DNA-binding region (H-T-H motif). Catalysis depends on for autocatalytic cleavage activity residues Ser138 and Lys175.

It belongs to the peptidase S24 family. As to quaternary structure, homodimer.

The enzyme catalyses Hydrolysis of Ala-|-Gly bond in repressor LexA.. Its function is as follows. Represses a number of genes involved in the response to DNA damage (SOS response), including recA and lexA. In the presence of single-stranded DNA, RecA interacts with LexA causing an autocatalytic cleavage which disrupts the DNA-binding part of LexA, leading to derepression of the SOS regulon and eventually DNA repair. The chain is LexA repressor from Herminiimonas arsenicoxydans.